A 1320-amino-acid polypeptide reads, in one-letter code: Immunoglobulin superfamily member 1 (1320 aa).

An N-terminal signal peptide occupies residues 1-18 (MMLRTFTLLLLCIWLNRG). At 19 to 504 (MTSMAAVESQ…LPWNSILNEA (486 aa)) the chain is on the extracellular side. 5 Ig-like C2-type domains span residues 29–113 (PELW…KILE), 115–212 (EAPG…KLVV), 224–308 (HPGP…IWVT), 312–399 (PKTW…ATYN), and 401–482 (VELI…HRSE). Residue Asn-44 is glycosylated (N-linked (GlcNAc...) asparagine). A disulfide bridge connects residues Cys-49 and Cys-97. 3 N-linked (GlcNAc...) asparagine glycosylation sites follow: Asn-329, Asn-365, and Asn-372. Cystine bridges form between Cys-334-Cys-383 and Cys-423-Cys-466. A helical transmembrane segment spans residues 505–525 (IRVSLTVQFLSLLLLVLWLQW). The Cytoplasmic portion of the chain corresponds to 526–534 (KCRRLRLRE). The chain crosses the membrane as a helical span at residues 535–555 (AWLLGTAQGVAMLVILIALLC). Over 556–1320 (CGLCNGALTE…GVSVEQTVPI (765 aa)) the chain is Extracellular. 7 consecutive Ig-like C2-type domains span residues 572–665 (PTPK…VGTD), 662–756 (VGTD…ELVI), 761–853 (PKPF…LIVT), 857–942 (PKPT…YLST), 949–1044 (TDTF…ELIV), 1049–1134 (PKPS…NHSN), and 1145–1226 (PKPS…EPSD). Asn-591, Asn-731, Asn-782, Asn-830, Asn-874, Asn-923, Asn-970, Asn-1011, and Asn-1066 each carry an N-linked (GlcNAc...) asparagine glycan. An intrachain disulfide couples Cys-783 to Cys-833. The cysteines at positions 879 and 926 are disulfide-linked. An intrachain disulfide couples Cys-1071 to Cys-1118. Asn-1131 and Asn-1207 each carry an N-linked (GlcNAc...) asparagine glycan. Cys-1167 and Cys-1210 form a disulfide bridge.

In terms of assembly, interacts with INHA; the interaction is not confirmed by standard receptor binding assays. Interacts with ACVR1B; the interaction appears to be ligand-dependent as it is diminished by inhibin B and activin A. Interacts with ACVR2A, ACVR2B, ACVRL1 and BMPR1B. Interacts with HECTD1. Expressed in pituitary gland, testis and liver. Isoform 2 is expressed pituitary gland and testis.

It is found in the membrane. It localises to the secreted. Functionally, seems to be a coreceptor in inhibin signaling, but seems not to be a high-affinity inhibin receptor. Antagonizes activin A signaling in the presence or absence of inhibin B. Necessary to mediate a specific antagonistic effect of inhibin B on activin-stimulated transcription. The protein is Immunoglobulin superfamily member 1 (Igsf1) of Rattus norvegicus (Rat).